Here is a 379-residue protein sequence, read N- to C-terminus: Muconate cycloisomerase 1-1 (379 aa).

Lysine 169 is an active-site residue. Mn(2+)-binding residues include aspartate 198, glutamate 224, and aspartate 247.

This sequence belongs to the mandelate racemase/muconate lactonizing enzyme family. In terms of assembly, homooctamer. The cofactor is Mn(2+).

The catalysed reaction is (S)-muconolactone = cis,cis-muconate + H(+). Its pathway is aromatic compound metabolism; beta-ketoadipate pathway; 5-oxo-4,5-dihydro-2-furylacetate from catechol: step 2/3. In terms of biological role, catalyzes a syn cycloisomerization. The protein is Muconate cycloisomerase 1-1 (catB1) of Acinetobacter lwoffii.